The primary structure comprises 409 residues: Histidine--tRNA ligase (409 aa).

This sequence belongs to the class-II aminoacyl-tRNA synthetase family.

It is found in the cytoplasm. The enzyme catalyses tRNA(His) + L-histidine + ATP = L-histidyl-tRNA(His) + AMP + diphosphate + H(+). This Methanosphaerula palustris (strain ATCC BAA-1556 / DSM 19958 / E1-9c) protein is Histidine--tRNA ligase.